We begin with the raw amino-acid sequence, 450 residues long: MLVPPVSMIMYHELPSIKNKKREKIPEGTLCVVCSDFASGIHYSVASCNGCKTFFRRALVNKQTFTCQFSGDCVVGKSVRCVCRSCRLKKCFDMGMDPKAIQHDRDKIRYTKALKKKREEEKRLKEMVIKEDIGSPQSIASDTYINTSTPSSSTMINILENDHHSYDPEAQNDVKAVIEDLLRLESRVKSLRNSYRFESQVSATSCMYSSCLLDDITYMAENTHENEGTIEPFECSVEKLREWFVRDLSLMLEWGKCLPIMERLLLNDKLALMKAFAPIFPLIQLAFYTRNEFECDIVIKLEPDCTPKPIPERLNYPDGSFIEKGNKPANTWEEMHTMLIDGCYKMMRQLKIKESTFVLYKMLLFHNPDADGLSSLGKKTIENERMRLLTQLFSYLSTERGKEAQTIFSNLLMMSATLSKTASFIKRVFDFNHIFNRTNDLIDQLIIVGL.

A DNA-binding region (nuclear receptor) is located at residues 28 to 103 (GTLCVVCSDF…MGMDPKAIQH (76 aa)). 2 NR C4-type zinc fingers span residues 31–51 (CVVCSDFASGIHYSVASCNGC) and 67–91 (CQFSGDCVVGKSVRCVCRSCRLKKC). Residues 173–450 (DVKAVIEDLL…LIDQLIIVGL (278 aa)) enclose the NR LBD domain.

The protein belongs to the nuclear hormone receptor family. As to expression, isoform b: Expressed in body wall muscle cells, pharyngeal muscles, rectal gland cells, vulval and uterine muscles and neurons in the head and ventral nerve cord. Isoform c: Expressed in body wall muscle cells, neurons in the head, nerve ring, ventral and dorsal nerve cords and epidermal cells in the tail.

The protein localises to the nucleus. In terms of biological role, orphan nuclear receptor. Plays a role in morphogenesis and elongation during embryonic and larval development. Plays a role in muscle formation and motility. This Caenorhabditis elegans protein is Nuclear hormone receptor family member nhr-40.